Reading from the N-terminus, the 395-residue chain is NAD(P)H-quinone oxidoreductase subunit H, chloroplastic (395 aa).

The protein belongs to the complex I 49 kDa subunit family. As to quaternary structure, NDH is composed of at least 16 different subunits, 5 of which are encoded in the nucleus.

It localises to the plastid. The protein localises to the chloroplast thylakoid membrane. The enzyme catalyses a plastoquinone + NADH + (n+1) H(+)(in) = a plastoquinol + NAD(+) + n H(+)(out). It catalyses the reaction a plastoquinone + NADPH + (n+1) H(+)(in) = a plastoquinol + NADP(+) + n H(+)(out). Functionally, NDH shuttles electrons from NAD(P)H:plastoquinone, via FMN and iron-sulfur (Fe-S) centers, to quinones in the photosynthetic chain and possibly in a chloroplast respiratory chain. The immediate electron acceptor for the enzyme in this species is believed to be plastoquinone. Couples the redox reaction to proton translocation, and thus conserves the redox energy in a proton gradient. This is NAD(P)H-quinone oxidoreductase subunit H, chloroplastic from Chloranthus spicatus (Chulantree).